The chain runs to 380 residues: Queuine tRNA-ribosyltransferase (380 aa).

The active-site Proton acceptor is the D96. Substrate is bound by residues 96-100 (DSGGF), D150, Q193, and G220. The interval 251 to 257 (GVGAPDS) is RNA binding. Residue D270 is the Nucleophile of the active site. The interval 275-279 (TRIAR) is RNA binding; important for wobble base 34 recognition. Zn(2+) is bound by residues C308, C310, C313, and H339.

It belongs to the queuine tRNA-ribosyltransferase family. In terms of assembly, homodimer. Within each dimer, one monomer is responsible for RNA recognition and catalysis, while the other monomer binds to the replacement base PreQ1. It depends on Zn(2+) as a cofactor.

The enzyme catalyses 7-aminomethyl-7-carbaguanine + guanosine(34) in tRNA = 7-aminomethyl-7-carbaguanosine(34) in tRNA + guanine. Its pathway is tRNA modification; tRNA-queuosine biosynthesis. Catalyzes the base-exchange of a guanine (G) residue with the queuine precursor 7-aminomethyl-7-deazaguanine (PreQ1) at position 34 (anticodon wobble position) in tRNAs with GU(N) anticodons (tRNA-Asp, -Asn, -His and -Tyr). Catalysis occurs through a double-displacement mechanism. The nucleophile active site attacks the C1' of nucleotide 34 to detach the guanine base from the RNA, forming a covalent enzyme-RNA intermediate. The proton acceptor active site deprotonates the incoming PreQ1, allowing a nucleophilic attack on the C1' of the ribose to form the product. After dissociation, two additional enzymatic reactions on the tRNA convert PreQ1 to queuine (Q), resulting in the hypermodified nucleoside queuosine (7-(((4,5-cis-dihydroxy-2-cyclopenten-1-yl)amino)methyl)-7-deazaguanosine). The sequence is that of Queuine tRNA-ribosyltransferase from Streptococcus agalactiae serotype Ia (strain ATCC 27591 / A909 / CDC SS700).